We begin with the raw amino-acid sequence, 401 residues long: MVVSVKVFKKATPNGKVTFYLGRRDFIDHIDYCDPVDGVIVVEPDYLKNRKVFGQLATTYRYGREEDEVMGVKFSKELILCREQIVPMTNPNMEMTPMQEKLVRKLGSNAYPFTFHFPPNSPSSVTLQQEGDDNGKPLGVEYTIRAFVGDSEDDRQHKRSMVSLVIKKLQYAPLNRGQRLPSSLVSKGFTFSNGKISLEVTLDREIYYHGEKTAATVQVSNNSKKSVKSIKCFIVQHTEITMVNAQFSKHVAQLETKEGCPITPGANLTKTFYLIPLAANNKDRHGIALDGHLKDEDVNLASSTMVQEGKSTGDACGIVISYSVRIKLNCGTLGGEMQTDVPFKLLQPAPGTIEKKRSNAMKKMKSIEQHRNVKGYYQDDDDNIVFEDFAKMRMNNVNMAD.

Phosphoserine; by CaMK is present on Ser366.

Belongs to the arrestin family. Post-translationally, phosphorylated upon light exposure. In terms of tissue distribution, expressed in photoreceptor cells.

It localises to the cell projection. It is found in the rhabdomere. Its function is as follows. Regulates photoreceptor cell deactivation. Arr1 and Arr2 proteins are mediators of rhodopsin inactivation and are essential for the termination of the phototransduction cascade. Involved in regulating normal cycles of per nuclear accumulation in brain circadian neurons and thus is important for normal circadian behavior. In the dark, functions with Arr1 to promote the formation of cytosolic Bdbt foci, which are required for dco localization to photoreceptor nuclei where it phosphorylates and activates degradation of per. This chain is Phosrestin-1 (Arr2), found in Drosophila melanogaster (Fruit fly).